The following is a 342-amino-acid chain: Zinc transporter ZIP11 (342 aa).

The next 7 membrane-spanning stretches (helical) occupy residues 12–32, 44–64, 72–92, 194–214, 263–285, 290–307, and 322–342; these read LLGTFFTWAMTAAGAALVFIF, LGFAAGVMLAASYWSLLAPAV, GFGAFAFFPVAVGFTLGAAFV, IALLILAITIHNIPEGLAVGV, FWYGQLSGMVEPLAGVFGAFAVV, ILPYALAFAAGAMVYVVM, and LASWASILGFVVMMSLDVGLG.

Belongs to the ZIP transporter (TC 2.A.5) family. As to expression, highly expressed in the testes and portions of the digestive system including the stomach, ileum and cecum. In contrast, expressed at very low levels in liver, duodenum, jejunum, and colon.

It localises to the cell membrane. The protein localises to the nucleus. The protein resides in the cytoplasm. It is found in the golgi apparatus. It catalyses the reaction Zn(2+)(in) = Zn(2+)(out). It carries out the reaction Cu(2+)(in) = Cu(2+)(out). In terms of biological role, zinc importer that regulates cytosolic zinc concentration either via zinc influx from the extracellular compartment or efflux from intracellular organelles such as Golgi apparatus. May transport copper ions as well. The transport mechanism remains to be elucidated. The sequence is that of Zinc transporter ZIP11 (Slc39a11) from Mus musculus (Mouse).